Here is a 559-residue protein sequence, read N- to C-terminus: DDB1- and CUL4-associated factor 10 (559 aa).

Residues 1 to 119 (MFPFGPHSPG…HGLGAGLGGP (119 aa)) form a disordered region. Phosphoserine occurs at positions 53, 63, 89, and 92. Residues 56-86 (RPGAPSLSPAPRSGELGLPGAPESSTASAPG) are compositionally biased toward low complexity. The segment covering 87-97 (EPSPPSPPCRR) has biased composition (pro residues). Arg-134 is modified (omega-N-methylarginine). WD repeat units follow at residues 166 to 205 (RTHG…HIKT), 209 to 247 (AHED…TKVC), 251 to 290 (GHTS…EDGC), and 296 to 335 (FHTR…KSLE). A Phosphoserine modification is found at Ser-349. The segment covering 350 to 367 (SSDLTTSSSSSGPRVSGS) has biased composition (low complexity). The interval 350-396 (SSDLTTSSSSSGPRVSGSPCHHSDSNSSEKHMSRASQREGVSPRNSL) is disordered. Positions 370-381 (HHSDSNSSEKHM) are enriched in basic and acidic residues. WD repeat units lie at residues 408–448 (DHGN…QEGA), 470–508 (VGRG…SELV), and 526–559 (SHND…QPKF).

The protein belongs to the WD repeat DCAF10 family. Interacts with DDB1.

The protein operates within protein modification; protein ubiquitination. In terms of biological role, may function as a substrate receptor for CUL4-DDB1 E3 ubiquitin-protein ligase complex. This chain is DDB1- and CUL4-associated factor 10 (DCAF10), found in Homo sapiens (Human).